Here is a 659-residue protein sequence, read N- to C-terminus: Macrolide export ATP-binding/permease protein MacB (659 aa).

The ABC transporter domain occupies 10 to 249 (IELRGIRKRY…QPLLHHAGLS (240 aa)). 47 to 54 (GSSGSGKS) serves as a coordination point for ATP. The next 4 helical transmembrane spans lie at 287-307 (SLTLLGIVIGVASVIVMLAIG), 538-558 (LGLVAAVSLLVGGIGVMNVML), 594-614 (ITGGTVGVILGLTVGALLVFW), and 619-639 (VFSFGVMIGAFACAVITGLIF).

This sequence belongs to the ABC transporter superfamily. Macrolide exporter (TC 3.A.1.122) family. Homodimer.

Its subcellular location is the cell inner membrane. Its function is as follows. Non-canonical ABC transporter that contains transmembrane domains (TMD), which form a pore in the inner membrane, and an ATP-binding domain (NBD), which is responsible for energy generation. Confers resistance against macrolides. This chain is Macrolide export ATP-binding/permease protein MacB, found in Nitrosomonas europaea (strain ATCC 19718 / CIP 103999 / KCTC 2705 / NBRC 14298).